The primary structure comprises 294 residues: MKQLTLAKTVKGVGIGLHKGEPIEITLEPLEANSGIVFFRSDLNASYKASPENVINTQMATVLGDDRGFISTIEHLMSAINAYGIDNVRIVLNANEAPVMDGSSISFCMMLDEAGVKELDAPKKIMVIKKPIEVRDGNKFVRLTPTKEPRINYTIKFDNAVIGEQSYNFEFSKKNYIENIARARTFGFLKDVQALRSMNLALGGSLENTIVVDENRILNPEGLRFKDEFVRHKILDAIGDLTLLGYRVFGDYTSYAGSHHLNHLLTKEVLKDKDAYEIVSLEKTTQKAYEKVFA.

The Zn(2+) site is built by His75, His232, and Asp236. The Proton donor role is filled by His259.

This sequence belongs to the LpxC family. The cofactor is Zn(2+).

The catalysed reaction is a UDP-3-O-[(3R)-3-hydroxyacyl]-N-acetyl-alpha-D-glucosamine + H2O = a UDP-3-O-[(3R)-3-hydroxyacyl]-alpha-D-glucosamine + acetate. It participates in glycolipid biosynthesis; lipid IV(A) biosynthesis; lipid IV(A) from (3R)-3-hydroxytetradecanoyl-[acyl-carrier-protein] and UDP-N-acetyl-alpha-D-glucosamine: step 2/6. Catalyzes the hydrolysis of UDP-3-O-myristoyl-N-acetylglucosamine to form UDP-3-O-myristoylglucosamine and acetate, the committed step in lipid A biosynthesis. This chain is UDP-3-O-acyl-N-acetylglucosamine deacetylase, found in Campylobacter jejuni subsp. jejuni serotype O:2 (strain ATCC 700819 / NCTC 11168).